A 278-amino-acid polypeptide reads, in one-letter code: Dermonecrotic toxin Ls4SicTox-alphaIII1ii (278 aa).

Residue His-5 is part of the active site. Positions 25 and 27 each coordinate Mg(2+). The Nucleophile role is filled by His-40. An intrachain disulfide couples Cys-44 to Cys-50. Asp-84 is a binding site for Mg(2+).

Belongs to the arthropod phospholipase D family. Class I subfamily. Mg(2+) serves as cofactor. In terms of tissue distribution, expressed by the venom gland.

It localises to the secreted. It carries out the reaction an N-(acyl)-sphingosylphosphocholine = an N-(acyl)-sphingosyl-1,3-cyclic phosphate + choline. It catalyses the reaction an N-(acyl)-sphingosylphosphoethanolamine = an N-(acyl)-sphingosyl-1,3-cyclic phosphate + ethanolamine. The enzyme catalyses a 1-acyl-sn-glycero-3-phosphocholine = a 1-acyl-sn-glycero-2,3-cyclic phosphate + choline. The catalysed reaction is a 1-acyl-sn-glycero-3-phosphoethanolamine = a 1-acyl-sn-glycero-2,3-cyclic phosphate + ethanolamine. In terms of biological role, dermonecrotic toxins cleave the phosphodiester linkage between the phosphate and headgroup of certain phospholipids (sphingolipid and lysolipid substrates), forming an alcohol (often choline) and a cyclic phosphate. This toxin acts on sphingomyelin (SM). It may also act on ceramide phosphoethanolamine (CPE), lysophosphatidylcholine (LPC) and lysophosphatidylethanolamine (LPE), but not on lysophosphatidylserine (LPS), and lysophosphatidylglycerol (LPG). It acts by transphosphatidylation, releasing exclusively cyclic phosphate products as second products. Induces dermonecrosis, hemolysis, increased vascular permeability, edema, inflammatory response, and platelet aggregation. This is Dermonecrotic toxin Ls4SicTox-alphaIII1ii from Loxosceles sp. (strain 4 GJB-2008) (Recluse spider).